The sequence spans 313 residues: Small ribosomal subunit protein uS2 (313 aa).

The segment at 281–301 (AAPAAPAVEPAPEAAQEATAE) is disordered.

This sequence belongs to the universal ribosomal protein uS2 family.

This chain is Small ribosomal subunit protein uS2, found in Caulobacter sp. (strain K31).